The primary structure comprises 349 residues: METPKTALLGRTLDEIQQIVRNLGMPKFAAKQITSWLYDKKVETIDEMTNLSLKHREALKEGYEVGASAPVEEMRSVDGTVKYLFRTPAHNFIEAVYIPDEDRATLCVSSQVGCKMNCKFCMTGKQGFTANLSAHQILNQIYSIPEREKLTNLVFMGMGEPFDNLDEVLKVLEILTSEYGYGWSPKRITVSSVGLKKGLERFLNESDCHLAISMHTPIPSQRRDLMPAEKAFSITEIIDILHNYDFSKQRRLSFEYIVFKGVNDSLIYAKEIVKLLRGIECRVNLIRFHAIPNVDLEGVDMETMVAFRDYLTQHGVFATIRASRGEDIFAACGMLSTAKQQKEKGVTLQ.

Catalysis depends on E94, which acts as the Proton acceptor. Positions 100–321 (DEDRATLCVS…TQHGVFATIR (222 aa)) constitute a Radical SAM core domain. C107 and C332 are disulfide-bonded. [4Fe-4S] cluster contacts are provided by C114, C118, and C121. S-adenosyl-L-methionine-binding positions include 159 to 160 (GE), S191, 213 to 215 (SMH), and H289. Catalysis depends on C332, which acts as the S-methylcysteine intermediate.

It belongs to the radical SAM superfamily. RlmN family. Requires [4Fe-4S] cluster as cofactor.

Its subcellular location is the cytoplasm. It carries out the reaction adenosine(2503) in 23S rRNA + 2 reduced [2Fe-2S]-[ferredoxin] + 2 S-adenosyl-L-methionine = 2-methyladenosine(2503) in 23S rRNA + 5'-deoxyadenosine + L-methionine + 2 oxidized [2Fe-2S]-[ferredoxin] + S-adenosyl-L-homocysteine. The enzyme catalyses adenosine(37) in tRNA + 2 reduced [2Fe-2S]-[ferredoxin] + 2 S-adenosyl-L-methionine = 2-methyladenosine(37) in tRNA + 5'-deoxyadenosine + L-methionine + 2 oxidized [2Fe-2S]-[ferredoxin] + S-adenosyl-L-homocysteine. Specifically methylates position 2 of adenine 2503 in 23S rRNA and position 2 of adenine 37 in tRNAs. The chain is Probable dual-specificity RNA methyltransferase RlmN from Phocaeicola vulgatus (strain ATCC 8482 / DSM 1447 / JCM 5826 / CCUG 4940 / NBRC 14291 / NCTC 11154) (Bacteroides vulgatus).